A 302-amino-acid chain; its full sequence is N-acetylmuramic acid 6-phosphate etherase (302 aa).

Residues 58 to 221 (IFERFKKGGR…TTTLMIKLGK (164 aa)) form the SIS domain. Residue E86 is the Proton donor of the active site. The active site involves E117.

Belongs to the GCKR-like family. MurNAc-6-P etherase subfamily. Homodimer.

It catalyses the reaction N-acetyl-D-muramate 6-phosphate + H2O = N-acetyl-D-glucosamine 6-phosphate + (R)-lactate. It participates in amino-sugar metabolism; N-acetylmuramate degradation. In terms of biological role, specifically catalyzes the cleavage of the D-lactyl ether substituent of MurNAc 6-phosphate, producing GlcNAc 6-phosphate and D-lactate. The chain is N-acetylmuramic acid 6-phosphate etherase from Mycoplasma mycoides subsp. mycoides SC (strain CCUG 32753 / NCTC 10114 / PG1).